The primary structure comprises 419 residues: Tyrosine--tRNA ligase (419 aa).

Y34 contributes to the L-tyrosine binding site. The short motif at P39 to H48 is the 'HIGH' region element. L-tyrosine-binding residues include Y169, Q173, and D176. Positions K230–T234 match the 'KMSKS' region motif. K233 contributes to the ATP binding site. The region spanning V352–A419 is the S4 RNA-binding domain.

This sequence belongs to the class-I aminoacyl-tRNA synthetase family. TyrS type 1 subfamily. As to quaternary structure, homodimer.

It is found in the cytoplasm. The enzyme catalyses tRNA(Tyr) + L-tyrosine + ATP = L-tyrosyl-tRNA(Tyr) + AMP + diphosphate + H(+). Catalyzes the attachment of tyrosine to tRNA(Tyr) in a two-step reaction: tyrosine is first activated by ATP to form Tyr-AMP and then transferred to the acceptor end of tRNA(Tyr). This Geobacillus stearothermophilus (Bacillus stearothermophilus) protein is Tyrosine--tRNA ligase (tyrS).